A 329-amino-acid chain; its full sequence is Anthranilate phosphoribosyltransferase (329 aa).

5-phospho-alpha-D-ribose 1-diphosphate-binding positions include G78, 81 to 82, T86, 88 to 91, 106 to 114, and S118; these read GD, NLST, and KHGNRSASG. G78 contacts anthranilate. S90 lines the Mg(2+) pocket. N109 contributes to the anthranilate binding site. Residue R164 participates in anthranilate binding. Residues D221 and E222 each contribute to the Mg(2+) site.

Belongs to the anthranilate phosphoribosyltransferase family. As to quaternary structure, homodimer. It depends on Mg(2+) as a cofactor.

It carries out the reaction N-(5-phospho-beta-D-ribosyl)anthranilate + diphosphate = 5-phospho-alpha-D-ribose 1-diphosphate + anthranilate. It participates in amino-acid biosynthesis; L-tryptophan biosynthesis; L-tryptophan from chorismate: step 2/5. Its function is as follows. Catalyzes the transfer of the phosphoribosyl group of 5-phosphorylribose-1-pyrophosphate (PRPP) to anthranilate to yield N-(5'-phosphoribosyl)-anthranilate (PRA). This is Anthranilate phosphoribosyltransferase from Pyrobaculum islandicum (strain DSM 4184 / JCM 9189 / GEO3).